The following is a 72-amino-acid chain: uncharacterized protein (72 aa).

Residues Phe41 to Ile58 form a helical membrane-spanning segment.

The protein localises to the membrane. This is an uncharacterized protein from Dictyostelium discoideum (Social amoeba).